Consider the following 141-residue polypeptide: Hemoglobin subunit alpha (141 aa).

The region spanning 1–141 (VLSATDKANV…VATVLTSKYR (141 aa)) is the Globin domain. Ser3 carries the phosphoserine modification. An N6-succinyllysine mark is found at Lys7 and Lys11. An N6-acetyllysine; alternate modification is found at Lys16. Lys16 is subject to N6-succinyllysine; alternate. Position 24 is a phosphotyrosine (Tyr24). Lys40 is modified (N6-succinyllysine). An O2-binding site is contributed by His58. Heme b is bound at residue His87. Ser102 is subject to Phosphoserine. The residue at position 108 (Thr108) is a Phosphothreonine. Ser124 bears the Phosphoserine mark. Phosphothreonine occurs at positions 134 and 137. Residue Ser138 is modified to Phosphoserine.

The protein belongs to the globin family. In terms of assembly, heterotetramer of two alpha chains and two beta chains. As to expression, red blood cells.

Involved in oxygen transport from the lung to the various peripheral tissues. Its function is as follows. Hemopressin acts as an antagonist peptide of the cannabinoid receptor CNR1. Hemopressin-binding efficiently blocks cannabinoid receptor CNR1 and subsequent signaling. This is Hemoglobin subunit alpha (HBA) from Erinaceus europaeus (Western European hedgehog).